Reading from the N-terminus, the 211-residue chain is Probable septum site-determining protein MinC (211 aa).

This sequence belongs to the MinC family. Interacts with MinD and FtsZ.

Cell division inhibitor that blocks the formation of polar Z ring septums. Rapidly oscillates between the poles of the cell to destabilize FtsZ filaments that have formed before they mature into polar Z rings. Prevents FtsZ polymerization. The polypeptide is Probable septum site-determining protein MinC (Clostridium acetobutylicum (strain ATCC 824 / DSM 792 / JCM 1419 / IAM 19013 / LMG 5710 / NBRC 13948 / NRRL B-527 / VKM B-1787 / 2291 / W)).